Consider the following 402-residue polypeptide: MSRVSQARNLGKYFLLIDNMLVVLGFFVVFPLISIRFVDQMGWAAVMVGIALGLRQFIQQGLGIFGGAIADRFGAKPMIVTGMLMRAAGFATMGIAHEPWLLWFSCLLSGLGGTLFDPPRSALVVKLIRPQQRGRFFSLLMMQDSAGAVIGALLGSWLLQYDFRLVCATGAVLFVLCAAFNAWLLPAWKLSTVRTPVREGMTRVMRDKRFVTYVLTLAGYYMLAVQVMLMLPIMVNDVAGAPSAVKWMYAIEACLSLTLLYPIARWSEKHFRLEHRLMAGLLIMSLSMMPVGMVSGLQQLFTLICLFYIGSIIAEPARETLSASLADARARGSYMGFSRLGLAIGGAIGYIGGGWLFDLGKSVHQPELPWMMLGIIGIFTFLALGWQFSQKRAARRLLERDA.

The Cytoplasmic portion of the chain corresponds to methionine 1–lysine 12. Residues tyrosine 13–isoleucine 33 traverse the membrane as a helical segment. The Periplasmic segment spans residues serine 34 to glutamate 98. A helical membrane pass occupies residues proline 99 to phenylalanine 116. At aspartate 117–serine 138 the chain is on the cytoplasmic side. The helical transmembrane segment at leucine 139–leucine 159 threads the bilayer. At glutamine 160–arginine 164 the chain is on the periplasmic side. Residues leucine 165–leucine 185 traverse the membrane as a helical segment. Topologically, residues proline 186–tyrosine 213 are cytoplasmic. The chain crosses the membrane as a helical span at residues valine 214–methionine 234. The Periplasmic portion of the chain corresponds to valine 235–serine 243. A helical transmembrane segment spans residues alanine 244–alanine 264. Residues arginine 265–arginine 276 lie on the Cytoplasmic side of the membrane. Residues leucine 277–leucine 297 traverse the membrane as a helical segment. Residues glutamine 298 to glutamine 299 lie on the Periplasmic side of the membrane. Residues leucine 300–threonine 320 traverse the membrane as a helical segment. The Cytoplasmic portion of the chain corresponds to leucine 321–arginine 339. The helical transmembrane segment at leucine 340 to glycine 360 threads the bilayer. Residues lysine 361–glutamate 367 lie on the Periplasmic side of the membrane. Residues leucine 368 to phenylalanine 388 form a helical membrane-spanning segment. Topologically, residues serine 389–alanine 402 are cytoplasmic.

It belongs to the major facilitator superfamily. DHA1 family. MdtH (TC 2.A.1.2.21) subfamily.

It is found in the cell inner membrane. In terms of biological role, confers resistance to norfloxacin and enoxacin. The sequence is that of Multidrug resistance protein MdtH from Escherichia coli O157:H7.